A 146-amino-acid chain; its full sequence is UPF0742 protein PB2B2.17c (146 aa).

The helical transmembrane segment at 38–60 (LTVKYCLAVKLLIYLLYCWYIYS) threads the bilayer.

Belongs to the UPF0742 family.

It localises to the cytoplasm. Its subcellular location is the nucleus membrane. This is UPF0742 protein PB2B2.17c from Schizosaccharomyces pombe (strain 972 / ATCC 24843) (Fission yeast).